Here is a 229-residue protein sequence, read N- to C-terminus: Methyltransferase ctvB (229 aa).

The protein belongs to the methyltransferase superfamily.

It functions in the pathway mycotoxin biosynthesis. Functionally, methyltransferase; part of the gene cluster that mediates the biosynthesis of citreoviridin, an inhibitor of the of F1-ATPase beta-subunit. The HR-PKS ctvA accepts acetyl-CoA as the starter unit and catalyzes eight iterations of malonyl-CoA extension and four iterations of SAM-dependent methylation at C4, C12, C14, and C16. The KR and DH domains selectively act on the first six iterations to generate the hexaene chain. In the last three iterations, the KR and DH domains terminate their functions to yield a beta,delta-diketo ester moiety, which then undergoes intramolecular cyclization to yield an alpha-pyrone intermediate. Subsequently, ctvB methylates the alpha-pyrone hydroxyl group to generate citreomontanin. In order to form the tetrahydrofuran ring with the correct stereochemistry, the terminal alkenes of citreomontanin need to undergo isomerization to yield a (17Z)-hexaene, a step that could be catalyzed by ctvC. The (17Z)-hexaene then undergoes bisepoxidation by ctvC to form a (17R,16R,15S,14R)-bisepoxide moiety. Lastly, ctvD acts as a regioselective hydrolase to form the tetrahydrofuran ring with the substituents in the correct absolute configuration, completing the biosynthesis of citreoviridin. The protein is Methyltransferase ctvB of Aspergillus terreus (strain NIH 2624 / FGSC A1156).